Here is a 513-residue protein sequence, read N- to C-terminus: Acyltransferase uat1 (513 aa).

The active-site Proton acceptor is the H158.

Belongs to the plant acyltransferase family.

Its pathway is secondary metabolite biosynthesis. Acyltransferase; part of the gene cluster that mediates the biosynthesis of the glycolipid biosurfactant ustilagic acid (UA). UA is a secreted cellobiose glycolipid that is toxic for many microorganisms and confers biocontrol activity to U.maydis. UA consists of 15,16-dihydroxypalmitic or 2,15,16-trihydroxypalmitic acid, which is O-glycosidically linked to cellobiose at its terminal hydroxyl group. In addition, the cellobiose moiety is acetylated and acylated with a short-chain hydroxy fatty acid. UA biosynthesis starts with omega-hydroxylation of palmitic acid catalyzed by the cytochrome P450 monooxygenase cyp1. Terminal hydroxylation of palmitic acid precedes subterminal hydroxylation catalyzed by the cytochrome P450 monooxygenase cyp2. Sequential glucosylation of the hydroxy fatty acid is probably catalyzed by the glycosyltransferase ugt1. The cellobiose lipid is further decorated by acetylation of the proximal glucose residue and by acylation with a short-chain beta-hydroxy fatty acid at the distal glucose residue. The acyltransferase uat1 may be a good candidate for catalyzing either acetylation or acylation of the cellobiose lipid. The fatty acid synthase fas2 may be involved in synthesis of the carbon backbone of the short-chain beta-hydroxy fatty acid esterified to the cellobiose disaccharide. The secreted UA consists of a mixture of both alpha-hydroxylated and non-hydroxylated glycolipids; therefore, alpha-hydroxylation of the long-chain fatty, catalyzed by the fatty acid hydroxylase ahd1, occurs late in UA biosynthesis and may be the last step before secretion. This is Acyltransferase uat1 from Mycosarcoma maydis (Corn smut fungus).